The sequence spans 567 residues: Ribulokinase (567 aa).

Belongs to the ribulokinase family.

The catalysed reaction is D-ribulose + ATP = D-ribulose 5-phosphate + ADP + H(+). It catalyses the reaction L-ribulose + ATP = L-ribulose 5-phosphate + ADP + H(+). The protein operates within carbohydrate degradation; L-arabinose degradation via L-ribulose; D-xylulose 5-phosphate from L-arabinose (bacterial route): step 2/3. The chain is Ribulokinase from Vibrio parahaemolyticus serotype O3:K6 (strain RIMD 2210633).